Reading from the N-terminus, the 66-residue chain is Beta-defensin 107A (66 aa).

The signal sequence occupies residues 1–22; the sequence is MKIFFFIFAALILLAQIFQART. 2 disulfides stabilise this stretch: C37-C51 and C41-C60.

The protein belongs to the beta-defensin family.

Its subcellular location is the secreted. Has antibacterial activity. This is Beta-defensin 107A (DEFB107A) from Macaca fascicularis (Crab-eating macaque).